Reading from the N-terminus, the 728-residue chain is Catalase-peroxidase 1 (728 aa).

The segment at residues 91–218 (WHSAGTYRTA…LAAVQMGLIY (128 aa)) is a cross-link (tryptophyl-tyrosyl-methioninium (Trp-Tyr) (with M-244)). Residue His92 is the Proton acceptor of the active site. The tryptophyl-tyrosyl-methioninium (Tyr-Met) (with W-91) cross-link spans 218 to 244 (YVNPEGPDGNPDPVAAAHDIRETFARM). His259 lines the heme b pocket.

This sequence belongs to the peroxidase family. Peroxidase/catalase subfamily. In terms of assembly, homodimer or homotetramer. Requires heme b as cofactor. Formation of the three residue Trp-Tyr-Met cross-link is important for the catalase, but not the peroxidase activity of the enzyme.

It catalyses the reaction H2O2 + AH2 = A + 2 H2O. It carries out the reaction 2 H2O2 = O2 + 2 H2O. Bifunctional enzyme with both catalase and broad-spectrum peroxidase activity. The sequence is that of Catalase-peroxidase 1 from Burkholderia cenocepacia (strain HI2424).